A 289-amino-acid chain; its full sequence is Rhodopsin (289 aa).

Residues 1 to 7 (YLVNPAA) lie on the Extracellular side of the membrane. Residues 8 to 32 (YAALGAYMFLLILIGFPINFLTLYV) form a helical membrane-spanning segment. Residues 33-44 (TLEHKKLRTPLN) lie on the Cytoplasmic side of the membrane. A helical transmembrane segment spans residues 45–67 (YILLNLAVGNLFMVLGGFTTTMY). The Extracellular segment spans residues 68–81 (TSMHGYFVLGRLGC). An intrachain disulfide couples C81 to C158. The helical transmembrane segment at 82 to 104 (NLEGFFATLGGEIALWSLVVLAI) threads the bilayer. The short motif at 105–107 (ERW) is the 'Ionic lock' involved in activated form stabilization element. The Cytoplasmic portion of the chain corresponds to 105–123 (ERWIVVCKPISKFRFTEDH). Residues 124-144 (AIMGLAFSWVMGLACAVPPLV) form a helical membrane-spanning segment. At 145-173 (GWSRYIPEGMKCSCGVDYYTRAEGFNNES) the chain is on the extracellular side. N-linked (GlcNAc...) asparagine glycosylation occurs at N171. The chain crosses the membrane as a helical span at residues 174 to 195 (FVIYMFIVHFLIPLSVIFFCYG). Residues 196 to 223 (RLLCAVKEAAAAQQESETTQRAEKEVSR) lie on the Cytoplasmic side of the membrane. Residues 224–245 (MVVIMVIGFLVCWLPYASVAWW) traverse the membrane as a helical segment. Topologically, residues 246–257 (IFCNQGSDFGPI) are extracellular. The chain crosses the membrane as a helical span at residues 258–279 (FMTLPSFFAKRPAIYNPMIYIC). K267 is subject to N6-(retinylidene)lysine. Topologically, residues 280 to 289 (MNKQFRHCMI) are cytoplasmic.

The protein belongs to the G-protein coupled receptor 1 family. Opsin subfamily. In terms of processing, phosphorylated on some or all of the serine and threonine residues present in the C-terminal region. Post-translationally, contains one covalently linked retinal chromophore.

It is found in the membrane. It localises to the cell projection. The protein localises to the cilium. The protein resides in the photoreceptor outer segment. Its function is as follows. Photoreceptor required for image-forming vision at low light intensity. While most salt water fish species use retinal as chromophore, most freshwater fish use 3-dehydroretinal, or a mixture of retinal and 3-dehydroretinal. Light-induced isomerization of 11-cis to all-trans retinal triggers a conformational change that activates signaling via G-proteins. Subsequent receptor phosphorylation mediates displacement of the bound G-protein alpha subunit by arrestin and terminates signaling. The chain is Rhodopsin (rho) from Cottinella boulengeri (Short-headed sculpin).